The following is a 207-amino-acid chain: Cyclic di-AMP synthase CdaS (207 aa).

A coiled-coil region spans residues 13 to 37 (AFKGKIQVYLEQILGDASLILKTLH). The region spanning 63–205 (SFYLQSYIEE…DGVLYPLISP (143 aa)) is the DAC domain.

Belongs to the adenylate cyclase family. DacB/CdaS subfamily. In terms of assembly, forms dimers and probably also hexamers; the dimer may be active while the hexamer may not be active.

The catalysed reaction is 2 ATP = 3',3'-c-di-AMP + 2 diphosphate. Its function is as follows. One of 3 paralogous diadenylate cyclases (DAC) in this bacteria, catalyzing the condensation of 2 ATP molecules into cyclic di-AMP (c-di-AMP). Upon expression in E.coli leads to c-di-AMP synthesis. Overexpression of the hyperactive mutant (L44F) in the absence of c-di-AMP phosphodiesterase GdpP leads to growth defects in log phase (long curly cell filaments) that disappear upon sporulation; spore formation is normal, showing sporulation is insensitive to the excess c-di-AMP. In B.subtilis c-di-AMP is a second messenger that mediates growth, DNA repair and cell wall homeostasis; it is toxic when present in excess. This chain is Cyclic di-AMP synthase CdaS, found in Bacillus subtilis (strain 168).